Reading from the N-terminus, the 385-residue chain is Aspartate carbamoyltransferase 2, chloroplastic (385 aa).

The N-terminal 30 residues, 1–30 (MTASSSLFSCSMHMEVLTPKISKWPKNFVS), are a transit peptide targeting the chloroplast. Residues arginine 131 and threonine 132 each coordinate carbamoyl phosphate. UMP-binding residues include arginine 131 and threonine 132. Lysine 161 contributes to the L-aspartate binding site. Residues arginine 182, histidine 210, and glutamine 213 each coordinate carbamoyl phosphate. UMP is bound by residues arginine 182 and histidine 210. Arginine 243 and arginine 305 together coordinate UMP. Positions 243 and 305 each coordinate L-aspartate. Positions 345 and 346 each coordinate carbamoyl phosphate.

The protein belongs to the aspartate/ornithine carbamoyltransferase superfamily. ATCase family. As to quaternary structure, homotrimer.

The protein localises to the plastid. It localises to the chloroplast. It catalyses the reaction carbamoyl phosphate + L-aspartate = N-carbamoyl-L-aspartate + phosphate + H(+). It functions in the pathway pyrimidine metabolism; UMP biosynthesis via de novo pathway; (S)-dihydroorotate from bicarbonate: step 2/3. With respect to regulation, feedback inhibited by UMP. Functionally, catalyzes the condensation of carbamoyl phosphate and aspartate to form carbamoyl aspartate and inorganic phosphate, the committed step in the de novo pyrimidine nucleotide biosynthesis pathway. The polypeptide is Aspartate carbamoyltransferase 2, chloroplastic (PYRB2) (Pisum sativum (Garden pea)).